The sequence spans 224 residues: MFPKINTIDPYISLRLFEVKPKYVGYSSIDARNQSFAIHGIKNYEKFSNAGFFYTSPTEITCYCCGMKFCNWLYEKHPLQVHGFWSRNCGFMRATLGIIGLKKMIDSYNDYYNNEVFVKHKNRVYTHKRLEDMGFSKPFMRFILANAFIPPYRKYIHKIILNERYFTFKFAAHLLSFHKVNLDNQTTYCMTCGIEPIKKDENFCNACKTLNYKHYKTLNFSVKL.

Residues 29 to 92 (IDARNQSFAI…GFWSRNCGFM (64 aa)) form a BIR repeat. The Zn(2+) site is built by cysteine 62, cysteine 65, histidine 82, and cysteine 89.

It belongs to the asfivirus IAP family. In terms of assembly, interacts with subunit p17 of host CASP3.

The protein localises to the host cytoplasm. It localises to the virion. Prevent apoptosis of host cell by inhibiting caspase-3/CASP3 activation to promote the viral replication. Also induces the activation of host NF-kappaB. This African swine fever virus (isolate Pig/Haiti/H811/1981) (ASFV) protein is Inhibitor of apoptosis protein (p27).